The sequence spans 944 residues: Protein translocase subunit SecA (944 aa).

ATP-binding positions include Q90, 108 to 112 (GEGKT), and D509. Residues 533-565 (VKPEEGHKPPVSPQRKTKSAGFKEEKNKNLSIS) are disordered.

This sequence belongs to the SecA family. In terms of assembly, monomer and homodimer. Part of the essential Sec protein translocation apparatus which comprises SecA, SecYEG and auxiliary proteins SecDF. Other proteins may also be involved.

Its subcellular location is the cell inner membrane. It localises to the cellular thylakoid membrane. It is found in the cytoplasm. It catalyses the reaction ATP + H2O + cellular proteinSide 1 = ADP + phosphate + cellular proteinSide 2.. Part of the Sec protein translocase complex. Interacts with the SecYEG preprotein conducting channel. Has a central role in coupling the hydrolysis of ATP to the transfer of proteins into and across the cell membrane, serving as an ATP-driven molecular motor driving the stepwise translocation of polypeptide chains across the membrane. Its function is as follows. Probably participates in protein translocation into and across both the cytoplasmic and thylakoid membranes in cyanobacterial cells. The chain is Protein translocase subunit SecA from Prochlorococcus marinus (strain NATL1A).